A 165-amino-acid polypeptide reads, in one-letter code: MNGLTATGVTVGICAGLWQLVSSHVGLSQGWELLGTIGFVAFCSFYAAGGGKSGFIRSLAVNYSGMVWAFFAALTAGWLASVSGLSAFWASVITTVPFSAVVVWQGRFWLLSFIPGGFLGMTLFFASGMNWTVTLLGFLAGNCVGVISEYGGQKLSEATTKRDGY.

Helical transmembrane passes span 30–50 (GWEL…AAGG), 65–85 (GMVW…VSGL), 86–106 (SAFW…VWQG), 108–128 (FWLL…FASG), and 131–151 (WTVT…SEYG).

This sequence to E.coli YcdZ.

Its subcellular location is the cell membrane. This is an uncharacterized protein from Escherichia coli (strain K12).